A 275-amino-acid chain; its full sequence is Large ribosomal subunit protein uL2 (275 aa).

The segment covering 35 to 49 (DSQSSTAGRNNNGRI) has biased composition (polar residues). Disordered stretches follow at residues 35–59 (DSQS…GGHK) and 224–275 (AMNP…RHKR). Residues 50–59 (TTRHKGGGHK) are compositionally biased toward basic residues.

This sequence belongs to the universal ribosomal protein uL2 family. Part of the 50S ribosomal subunit. Forms a bridge to the 30S subunit in the 70S ribosome.

In terms of biological role, one of the primary rRNA binding proteins. Required for association of the 30S and 50S subunits to form the 70S ribosome, for tRNA binding and peptide bond formation. It has been suggested to have peptidyltransferase activity; this is somewhat controversial. Makes several contacts with the 16S rRNA in the 70S ribosome. In Burkholderia cenocepacia (strain HI2424), this protein is Large ribosomal subunit protein uL2.